The following is a 156-amino-acid chain: Large ribosomal subunit protein uL22 (156 aa).

Positions 114-156 (VESRPKQEKGGKAGASKASSRAARAQGSKAAAAKKTESKGGTS) are disordered. Low complexity predominate over residues 127 to 146 (GASKASSRAARAQGSKAAAA). Positions 147 to 156 (KKTESKGGTS) are enriched in basic and acidic residues.

The protein belongs to the universal ribosomal protein uL22 family. In terms of assembly, part of the 50S ribosomal subunit.

This protein binds specifically to 23S rRNA; its binding is stimulated by other ribosomal proteins, e.g. L4, L17, and L20. It is important during the early stages of 50S assembly. It makes multiple contacts with different domains of the 23S rRNA in the assembled 50S subunit and ribosome. Functionally, the globular domain of the protein is located near the polypeptide exit tunnel on the outside of the subunit, while an extended beta-hairpin is found that lines the wall of the exit tunnel in the center of the 70S ribosome. In Mycobacteroides abscessus (strain ATCC 19977 / DSM 44196 / CCUG 20993 / CIP 104536 / JCM 13569 / NCTC 13031 / TMC 1543 / L948) (Mycobacterium abscessus), this protein is Large ribosomal subunit protein uL22.